The chain runs to 285 residues: Release factor glutamine methyltransferase (285 aa).

Residues 119–123 (GTGSG), Glu-142, Trp-175, and Asn-191 each bind S-adenosyl-L-methionine. Substrate is bound at residue 191–194 (NPPY).

Belongs to the protein N5-glutamine methyltransferase family. PrmC subfamily.

It carries out the reaction L-glutaminyl-[peptide chain release factor] + S-adenosyl-L-methionine = N(5)-methyl-L-glutaminyl-[peptide chain release factor] + S-adenosyl-L-homocysteine + H(+). Its function is as follows. Methylates the class 1 translation termination release factors RF1/PrfA and RF2/PrfB on the glutamine residue of the universally conserved GGQ motif. This chain is Release factor glutamine methyltransferase, found in Burkholderia pseudomallei (strain K96243).